A 157-amino-acid chain; its full sequence is Probable succinate transporter subunit YjjB (157 aa).

4 helical membrane-spanning segments follow: residues 8 to 28, 50 to 70, 87 to 107, and 129 to 149; these read LALA…AMVF, MILM…SMLG, VFTV…TAMI, and FLTA…PGLW.

It belongs to the ThrE exporter (TC 2.A.79) family. The transporter is composed of YjjB and YjjP.

It localises to the cell inner membrane. Involved in succinate export with YjjP. Both proteins are required for export. This is Probable succinate transporter subunit YjjB from Escherichia coli O157:H7 (strain EC4115 / EHEC).